The chain runs to 291 residues: Phosphatidylserine decarboxylase proenzyme (291 aa).

Active-site charge relay system; for autoendoproteolytic cleavage activity residues include aspartate 90, histidine 147, and serine 253. The Schiff-base intermediate with substrate; via pyruvic acid; for decarboxylase activity role is filled by serine 253. Serine 253 carries the pyruvic acid (Ser); by autocatalysis modification.

Belongs to the phosphatidylserine decarboxylase family. PSD-B subfamily. Prokaryotic type I sub-subfamily. In terms of assembly, heterodimer of a large membrane-associated beta subunit and a small pyruvoyl-containing alpha subunit. It depends on pyruvate as a cofactor. Post-translationally, is synthesized initially as an inactive proenzyme. Formation of the active enzyme involves a self-maturation process in which the active site pyruvoyl group is generated from an internal serine residue via an autocatalytic post-translational modification. Two non-identical subunits are generated from the proenzyme in this reaction, and the pyruvate is formed at the N-terminus of the alpha chain, which is derived from the carboxyl end of the proenzyme. The autoendoproteolytic cleavage occurs by a canonical serine protease mechanism, in which the side chain hydroxyl group of the serine supplies its oxygen atom to form the C-terminus of the beta chain, while the remainder of the serine residue undergoes an oxidative deamination to produce ammonia and the pyruvoyl prosthetic group on the alpha chain. During this reaction, the Ser that is part of the protease active site of the proenzyme becomes the pyruvoyl prosthetic group, which constitutes an essential element of the active site of the mature decarboxylase.

The protein localises to the cell membrane. The catalysed reaction is a 1,2-diacyl-sn-glycero-3-phospho-L-serine + H(+) = a 1,2-diacyl-sn-glycero-3-phosphoethanolamine + CO2. It functions in the pathway phospholipid metabolism; phosphatidylethanolamine biosynthesis; phosphatidylethanolamine from CDP-diacylglycerol: step 2/2. Catalyzes the formation of phosphatidylethanolamine (PtdEtn) from phosphatidylserine (PtdSer). In Photobacterium profundum (strain SS9), this protein is Phosphatidylserine decarboxylase proenzyme.